The following is a 424-amino-acid chain: Acetyl-CoA acetyltransferase, mitochondrial (424 aa).

A mitochondrion-targeting transit peptide spans 1–30 (MAALVALHGVVRRPLLRGLLQEVRCLERSY). Residue K63 is modified to N6-acetyllysine; alternate. K63 is modified (N6-succinyllysine; alternate). K75 carries the post-translational modification N6-succinyllysine. C123 acts as the Acyl-thioester intermediate in catalysis. K171, K178, K187, and K199 each carry N6-acetyllysine; alternate. K171, K178, K187, and K199 each carry N6-succinyllysine; alternate. At S204 the chain carries Phosphoserine. Y216 lines the CoA pocket. K(+) is bound at residue Y216. N6-acetyllysine; alternate is present on residues K220 and K227. K220 and K227 each carry N6-succinyllysine; alternate. An N6-succinyllysine modification is found at K240. K242 is subject to N6-acetyllysine; alternate. An N6-succinyllysine; alternate modification is found at K242. An N6-acetyllysine mark is found at K248 and K254. Residues 255–257 (RVD) and K260 contribute to the CoA site. K260 bears the N6-acetyllysine; alternate mark. K260 is subject to N6-succinyllysine; alternate. Residues K263 and K265 each carry the N6-succinyllysine modification. K270 carries the post-translational modification N6-acetyllysine. Positions 277, 278, and 280 each coordinate K(+). S281 provides a ligand contact to CoA. K335 bears the N6-acetyllysine mark. V378 contributes to the K(+) binding site. Catalysis depends on C410, which acts as the Proton donor/acceptor.

This sequence belongs to the thiolase-like superfamily. Thiolase family. In terms of assembly, homotetramer. Post-translationally, succinylation at Lys-265, adjacent to a coenzyme A binding site. Desuccinylated by SIRT5.

Its subcellular location is the mitochondrion. It catalyses the reaction 2 acetyl-CoA = acetoacetyl-CoA + CoA. The enzyme catalyses propanoyl-CoA + acetyl-CoA = 2-methyl-3-oxobutanoyl-CoA + CoA. Its pathway is lipid metabolism; fatty acid beta-oxidation. Activated by potassium ions, but not sodium ions. In terms of biological role, this is one of the enzymes that catalyzes the last step of the mitochondrial beta-oxidation pathway, an aerobic process breaking down fatty acids into acetyl-CoA. Using free coenzyme A/CoA, catalyzes the thiolytic cleavage of medium- to long-chain 3-oxoacyl-CoAs into acetyl-CoA and a fatty acyl-CoA shortened by two carbon atoms. The activity of the enzyme is reversible and it can also catalyze the condensation of two acetyl-CoA molecules into acetoacetyl-CoA. Thereby, it plays a major role in ketone body metabolism. The chain is Acetyl-CoA acetyltransferase, mitochondrial (Acat1) from Mus musculus (Mouse).